A 550-amino-acid chain; its full sequence is Glucose-6-phosphate isomerase (550 aa).

Residues 164–165 (GS), 215–220 (SKTFTT), Gln-359, Glu-363, and His-394 each bind D-glucose 6-phosphate. Glu-363 functions as the Proton donor in the catalytic mechanism. His-394 is a catalytic residue. Thr-455 bears the Phosphothreonine mark. Position 516 (Lys-516) interacts with D-glucose 6-phosphate. Lys-516 is a catalytic residue.

The protein belongs to the GPI family. Homodimer.

Its subcellular location is the cytoplasm. It localises to the cytosol. It catalyses the reaction alpha-D-glucose 6-phosphate = beta-D-fructose 6-phosphate. It participates in carbohydrate degradation; glycolysis; D-glyceraldehyde 3-phosphate and glycerone phosphate from D-glucose: step 2/4. Its function is as follows. In the cytoplasm, catalyzes the conversion of glucose-6-phosphate to fructose-6-phosphate, the second step in glycolysis, and the reverse reaction during gluconeogenesis. The chain is Glucose-6-phosphate isomerase (pgi1) from Schizosaccharomyces pombe (strain 972 / ATCC 24843) (Fission yeast).